A 188-amino-acid polypeptide reads, in one-letter code: D-glycero-beta-D-manno-heptose-1,7-bisphosphate 7-phosphatase (188 aa).

D11 serves as the catalytic Nucleophile. The Mg(2+) site is built by D11 and D13. Substrate contacts are provided by residues 11 to 13 (DRD), 19 to 22 (DHGY), and 53 to 56 (TNQS). D13 (proton donor) is an active-site residue. The Zn(2+) site is built by C92, H94, C107, and C109. Position 110–111 (110–111 (RK)) interacts with substrate. D136 and K137 together coordinate Mg(2+). K137 is a substrate binding site.

The protein belongs to the GmhB family. Monomer. Mg(2+) is required as a cofactor. Requires Zn(2+) as cofactor.

It is found in the cytoplasm. The catalysed reaction is D-glycero-beta-D-manno-heptose 1,7-bisphosphate + H2O = D-glycero-beta-D-manno-heptose 1-phosphate + phosphate. The protein operates within nucleotide-sugar biosynthesis; ADP-L-glycero-beta-D-manno-heptose biosynthesis; ADP-L-glycero-beta-D-manno-heptose from D-glycero-beta-D-manno-heptose 7-phosphate: step 2/4. It functions in the pathway bacterial outer membrane biogenesis; LPS core biosynthesis. Functionally, converts the D-glycero-beta-D-manno-heptose 1,7-bisphosphate intermediate into D-glycero-beta-D-manno-heptose 1-phosphate by removing the phosphate group at the C-7 position. This Yersinia pestis protein is D-glycero-beta-D-manno-heptose-1,7-bisphosphate 7-phosphatase (gmhB).